The following is a 353-amino-acid chain: uncharacterized protein (353 aa).

An N-terminal signal peptide occupies residues 1–23; that stretch reads MSAGKGLLLVICLLFLPLKSAMA.

The protein to E.coli YqiI.

In terms of biological role, may be involved in a fimbrial system chaperoned by YbgP and exported by YbgQ. This is an uncharacterized protein from Escherichia coli (strain K12).